The chain runs to 380 residues: MKKIILLGATGSIGTQTLAIIRENPEKFQVVALSFGRNMERGRAIIKEFKPKMVAVWHTRDRVTLEAEFPNVKFFNGLEGLREVATYLDGDVLLNAVMGSVGLLPTLDAIEAGKAIAIANKETLVTAGHLVMRAAKEKNISLLPVDSEHSAILQALNGENTERIEKIVLTASGGSFRDKTREQLSLVTVKEALKHPNWNMGNKLTIDSATMFNKGLEVMEAHWLFGVDYDDIEVVIQRESIIHSMVQFVDGSFIAQLGTPDMRMPIQYALTYPDRLYIPYEKEFRITDFSALHFEKVDYERFPALKLAYNAGKIGGTMPTVLNAANEIAVAGFLNGQVAFYNIEALVENAMNRHTSISDPDLDTILQVDQETRAYVKTLL.

Threonine 10, glycine 11, serine 12, isoleucine 13, glycine 36, arginine 37, asparagine 38, and asparagine 120 together coordinate NADPH. Lysine 121 serves as a coordination point for 1-deoxy-D-xylulose 5-phosphate. Position 122 (glutamate 122) interacts with NADPH. Mn(2+) is bound at residue aspartate 146. Positions 147, 148, 172, and 195 each coordinate 1-deoxy-D-xylulose 5-phosphate. Glutamate 148 contacts Mn(2+). Glycine 201 is an NADPH binding site. 1-deoxy-D-xylulose 5-phosphate contacts are provided by serine 208, asparagine 213, lysine 214, and glutamate 217. Glutamate 217 lines the Mn(2+) pocket.

Belongs to the DXR family. The cofactor is Mg(2+). Requires Mn(2+) as cofactor.

The catalysed reaction is 2-C-methyl-D-erythritol 4-phosphate + NADP(+) = 1-deoxy-D-xylulose 5-phosphate + NADPH + H(+). It functions in the pathway isoprenoid biosynthesis; isopentenyl diphosphate biosynthesis via DXP pathway; isopentenyl diphosphate from 1-deoxy-D-xylulose 5-phosphate: step 1/6. Its function is as follows. Catalyzes the NADPH-dependent rearrangement and reduction of 1-deoxy-D-xylulose-5-phosphate (DXP) to 2-C-methyl-D-erythritol 4-phosphate (MEP). The sequence is that of 1-deoxy-D-xylulose 5-phosphate reductoisomerase from Listeria monocytogenes serotype 4a (strain HCC23).